Here is a 140-residue protein sequence, read N- to C-terminus: Histone H2B (140 aa).

A compositionally biased stretch (basic and acidic residues) spans 1–10 (MPPKAAEKKP). The disordered stretch occupies residues 1 to 48 (MPPKAAEKKPSTGGKAPAGKAPAEKKEAGKKTAAAATGDKKKRGKTRK). Lysine 8 and lysine 9 each carry N6-acetyllysine; alternate. Glycyl lysine isopeptide (Lys-Gly) (interchain with G-Cter in SUMO); alternate cross-links involve residues lysine 8 and lysine 9. A compositionally biased stretch (low complexity) spans 11 to 21 (STGGKAPAGKA). Lysine 15 carries the N6-acetyllysine modification. An N6-acetyllysine; alternate modification is found at lysine 25. Lysine 25 is covalently cross-linked (Glycyl lysine isopeptide (Lys-Gly) (interchain with G-Cter in SUMO); alternate). Lysine 26 is covalently cross-linked (Glycyl lysine isopeptide (Lys-Gly) (interchain with G-Cter in SUMO)). Residue lysine 134 forms a Glycyl lysine isopeptide (Lys-Gly) (interchain with G-Cter in ubiquitin) linkage.

The protein belongs to the histone H2B family. As to quaternary structure, the nucleosome is a histone octamer containing two molecules each of H2A, H2B, H3 and H4 assembled in one H3-H4 heterotetramer and two H2A-H2B heterodimers. The octamer wraps approximately 147 bp of DNA. Monoubiquitinated by the ubc2-bre1 complex to form H2BK123ub1. H2BK123ub1 gives a specific tag for epigenetic transcriptional activation and is also prerequisite for H3K4me and H3K79me formation. H2BK123ub1 also modulates the formation of double-strand breaks during meiosis and is a prerequisite for DNA-damage checkpoint activation. Post-translationally, acetylated by gcn5 to form H2BK11ac and H2BK16ac. H2BK16ac can also be formed by esa1. Acetylation of N-terminal lysines and particularly formation of H2BK11acK16ac has a positive effect on transcription. In terms of processing, sumoylation to form H2BK6su or H2BK7su, and probably also H2BK16su or H2BK17su, occurs preferentially near the telomeres and represses gene transcription.

The protein localises to the nucleus. It localises to the chromosome. Functionally, core component of nucleosome. Nucleosomes wrap and compact DNA into chromatin, limiting DNA accessibility to the cellular machineries which require DNA as a template. Histones thereby play a central role in transcription regulation, DNA repair, DNA replication and chromosomal stability. DNA accessibility is regulated via a complex set of post-translational modifications of histones, also called histone code, and nucleosome remodeling. The protein is Histone H2B (htb1) of Neosartorya fischeri (strain ATCC 1020 / DSM 3700 / CBS 544.65 / FGSC A1164 / JCM 1740 / NRRL 181 / WB 181) (Aspergillus fischerianus).